We begin with the raw amino-acid sequence, 353 residues long: Holliday junction branch migration complex subunit RuvB (353 aa).

The segment at 1–182 (MPERLITPKG…FGIVQRLEFY (182 aa)) is large ATPase domain (RuvB-L). ATP-binding positions include Ile-21, Arg-22, Gly-63, Lys-66, Thr-67, Thr-68, 129 to 131 (EDF), Arg-172, Tyr-182, and Arg-219. Mg(2+) is bound at residue Thr-67. The interval 183–253 (NVQDLTRIVQ…VADRALDLLD (71 aa)) is small ATPAse domain (RuvB-S). Residues 256–353 (VQGFDAQDRR…QEEGGGEGKL (98 aa)) are head domain (RuvB-H). 3 residues coordinate DNA: Arg-292, Arg-311, and Arg-316.

Belongs to the RuvB family. In terms of assembly, homohexamer. Forms an RuvA(8)-RuvB(12)-Holliday junction (HJ) complex. HJ DNA is sandwiched between 2 RuvA tetramers; dsDNA enters through RuvA and exits via RuvB. An RuvB hexamer assembles on each DNA strand where it exits the tetramer. Each RuvB hexamer is contacted by two RuvA subunits (via domain III) on 2 adjacent RuvB subunits; this complex drives branch migration. In the full resolvosome a probable DNA-RuvA(4)-RuvB(12)-RuvC(2) complex forms which resolves the HJ.

The protein localises to the cytoplasm. The enzyme catalyses ATP + H2O = ADP + phosphate + H(+). Functionally, the RuvA-RuvB-RuvC complex processes Holliday junction (HJ) DNA during genetic recombination and DNA repair, while the RuvA-RuvB complex plays an important role in the rescue of blocked DNA replication forks via replication fork reversal (RFR). RuvA specifically binds to HJ cruciform DNA, conferring on it an open structure. The RuvB hexamer acts as an ATP-dependent pump, pulling dsDNA into and through the RuvAB complex. RuvB forms 2 homohexamers on either side of HJ DNA bound by 1 or 2 RuvA tetramers; 4 subunits per hexamer contact DNA at a time. Coordinated motions by a converter formed by DNA-disengaged RuvB subunits stimulates ATP hydrolysis and nucleotide exchange. Immobilization of the converter enables RuvB to convert the ATP-contained energy into a lever motion, pulling 2 nucleotides of DNA out of the RuvA tetramer per ATP hydrolyzed, thus driving DNA branch migration. The RuvB motors rotate together with the DNA substrate, which together with the progressing nucleotide cycle form the mechanistic basis for DNA recombination by continuous HJ branch migration. Branch migration allows RuvC to scan DNA until it finds its consensus sequence, where it cleaves and resolves cruciform DNA. The chain is Holliday junction branch migration complex subunit RuvB from Thioalkalivibrio sulfidiphilus (strain HL-EbGR7).